The chain runs to 355 residues: Small ribosomal subunit protein uS2 (355 aa).

It belongs to the universal ribosomal protein uS2 family.

The polypeptide is Small ribosomal subunit protein uS2 (Methylorubrum extorquens (strain CM4 / NCIMB 13688) (Methylobacterium extorquens)).